A 405-amino-acid chain; its full sequence is Envelope glycoprotein M (405 aa).

The Intravirion portion of the chain corresponds to 1–17 (MKSSKNDTFVYRTWVKT). The helical transmembrane segment at 18–38 (LVVYFVMFVMSAVVPITAMFP) threads the bilayer. Residues 39–76 (NLGYPCYFNALVDYGALNLTNYNLAHHLTPTLYLEPPE) lie on the Virion surface side of the membrane. The chain crosses the membrane as a helical span at residues 77–97 (MFVYITLVFIADCVAFIYYAC). Residues 98 to 121 (GEVALIKARKKVSGLTDLSAWVSA) are Intravirion-facing. Residues 122-142 (VGSPTVLFLAILKLWSIQVFI) form a helical membrane-spanning segment. The Virion surface segment spans residues 143–149 (QVLSYKH). The helical transmembrane segment at 150–170 (VFLSAFVYFLHFLASVLHACA) threads the bilayer. The Intravirion portion of the chain corresponds to 171 to 192 (CVTRFSPVWVVKAQDNSIPQDT). A helical transmembrane segment spans residues 193-215 (FLWWVVFYLKPVVTNLYLGCLAL). Residues 216–245 (ETLVFSLSVFLALGNSFYFMVGDMVLGAVN) lie on the Virion surface side of the membrane. A helical transmembrane segment spans residues 246-266 (LFLILPIFWYILTEVWLASFM). Residue arginine 267 is a topological domain, intravirion. A helical transmembrane segment spans residues 268 to 288 (HNFGFYCGMFIASIILILPLV). At 289 to 299 (RYEAVFVSAKL) the chain is on the virion surface side. A helical membrane pass occupies residues 300-320 (HTTVAINVAIIPILCSVAMLI). Topologically, residues 321 to 405 (RICRIFKSMR…TTDSEEEIFP (85 aa)) are intravirion. The segment at 346-405 (LESEPRPRPSRTPSPGRNRRRSSTSSSSSRSTRRQRPVSTQALVSSVLPMTTDSEEEIFP) is disordered. The segment covering 386–397 (QALVSSVLPMTT) has biased composition (polar residues).

Belongs to the herpesviridae glycoprotein M family. As to quaternary structure, interacts (via N-terminus) with gN (via N-terminus). The gM-gN heterodimer forms the gCII complex.

Its subcellular location is the virion membrane. It localises to the host Golgi apparatus. It is found in the host trans-Golgi network. The protein localises to the host endosome membrane. The protein resides in the host nucleus inner membrane. Its function is as follows. Envelope glycoprotein important for virion assembly and egress. Plays a role in the correct incorporation of gH-gL into virion membrane. Directs the glycoprotein N (gN) to the host trans-Golgi network. This Epstein-Barr virus (strain GD1) (HHV-4) protein is Envelope glycoprotein M.